A 148-amino-acid chain; its full sequence is Transcriptional regulator MraZ (148 aa).

SpoVT-AbrB domains follow at residues 5–53 (ETAI…VEKE) and 82–125 (SALL…SEQA).

The protein belongs to the MraZ family. In terms of assembly, forms oligomers.

The protein resides in the cytoplasm. Its subcellular location is the nucleoid. In Xylella fastidiosa (strain Temecula1 / ATCC 700964), this protein is Transcriptional regulator MraZ.